A 61-amino-acid polypeptide reads, in one-letter code: Large ribosomal subunit protein uL30 (61 aa).

This sequence belongs to the universal ribosomal protein uL30 family. In terms of assembly, part of the 50S ribosomal subunit.

The protein is Large ribosomal subunit protein uL30 of Corynebacterium glutamicum (strain R).